The chain runs to 213 residues: ATP synthase peripheral stalk subunit OSCP, mitochondrial (213 aa).

The transit peptide at 1–23 (MASQAVSGLSRQVRCFSTSVVRP) directs the protein to the mitochondrion. An SIFI-degron motif is present at residues 5–23 (AVSGLSRQVRCFSTSVVRP). N6-acetyllysine is present on residues Lys-54, Lys-60, Lys-70, and Lys-73. Residue Lys-90 is modified to N6-succinyllysine. An N6-acetyllysine; alternate mark is found at Lys-100, Lys-158, and Lys-162. An N6-succinyllysine; alternate mark is found at Lys-100, Lys-158, and Lys-162. 3 positions are modified to N6-acetyllysine: Lys-172, Lys-176, and Lys-192. Lys-199 is modified (N6-succinyllysine).

The protein belongs to the ATPase delta chain family. As to quaternary structure, component of the ATP synthase complex composed at least of ATP5F1A/subunit alpha, ATP5F1B/subunit beta, ATP5MC1/subunit c (homooctomer), MT-ATP6/subunit a, MT-ATP8/subunit 8, ATP5ME/subunit e, ATP5MF/subunit f, ATP5MG/subunit g, ATP5MK/subunit k, ATP5MJ/subunit j, ATP5F1C/subunit gamma, ATP5F1D/subunit delta, ATP5F1E/subunit epsilon, ATP5PF/subunit F6, ATP5PB/subunit b, ATP5PD/subunit d, ATP5PO/subunit OSCP. ATP synthase complex consists of a soluble F(1) head domain (subunits alpha(3) and beta(3)) - the catalytic core - and a membrane F(0) domain - the membrane proton channel (subunits c, a, 8, e, f, g, k and j). These two domains are linked by a central stalk (subunits gamma, delta, and epsilon) rotating inside the F1 region and a stationary peripheral stalk (subunits F6, b, d, and OSCP). Post-translationally, acetylation at Lys-162 decreases ATP production. Deacetylated by SIRT3. In response to mitochondrial stress, the precursor protein is ubiquitinated by the SIFI complex in the cytoplasm before mitochondrial import, leading to its degradation. Within the SIFI complex, UBR4 initiates ubiquitin chain that are further elongated or branched by KCMF1.

It is found in the mitochondrion. Its subcellular location is the mitochondrion inner membrane. In terms of biological role, subunit OSCP, of the mitochondrial membrane ATP synthase complex (F(1)F(0) ATP synthase or Complex V) that produces ATP from ADP in the presence of a proton gradient across the membrane which is generated by electron transport complexes of the respiratory chain. ATP synthase complex consist of a soluble F(1) head domain - the catalytic core - and a membrane F(1) domain - the membrane proton channel. These two domains are linked by a central stalk rotating inside the F(1) region and a stationary peripheral stalk. During catalysis, ATP synthesis in the catalytic domain of F(1) is coupled via a rotary mechanism of the central stalk subunits to proton translocation. In vivo, can only synthesize ATP although its ATP hydrolase activity can be activated artificially in vitro. Part of the complex F(0) domain. Part of the complex F(0) domain and the peripheric stalk, which acts as a stator to hold the catalytic alpha(3)beta(3) subcomplex and subunit a/ATP6 static relative to the rotary elements. The chain is ATP synthase peripheral stalk subunit OSCP, mitochondrial from Sus scrofa (Pig).